The following is a 131-amino-acid chain: UPF0102 protein YraN (131 aa).

Polar residues predominate over residues 1-19 (MATVPTRSGSPRQLTTKQT). The disordered stretch occupies residues 1–20 (MATVPTRSGSPRQLTTKQTG).

It belongs to the UPF0102 family.

This chain is UPF0102 protein YraN, found in Escherichia coli O8 (strain IAI1).